A 41-amino-acid chain; its full sequence is Large ribosomal subunit protein bL36 (41 aa).

Belongs to the bacterial ribosomal protein bL36 family.

This is Large ribosomal subunit protein bL36 from Phenylobacterium zucineum (strain HLK1).